The sequence spans 338 residues: (-)-alpha-amorphene synthase ((2E,6E)-farnesyl diphosphate cyclizing) (338 aa).

Mg(2+) contacts are provided by D105 and E109. Residues 105 to 109 (DDRAE) carry the DDXXE motif motif. R196 lines the substrate pocket. Position 246 (S246) interacts with Mg(2+). K249 contributes to the substrate binding site. E250 contributes to the Mg(2+) binding site. Substrate is bound at residue 327–328 (RY).

It belongs to the terpene synthase family. It depends on Mg(2+) as a cofactor.

It carries out the reaction (2E,6E)-farnesyl diphosphate = (-)-alpha-amorphene + diphosphate. It participates in secondary metabolite biosynthesis; terpenoid biosynthesis. In terms of biological role, catalyzes the conversion of (2E,6E)-farnesyl diphosphate (FPP) to yield the bicyclic sesquiterpene (1R,6S,7S)-(-)-alpha-amorphene via a probable 1,6-cyclization, which could involve the abstraction of the pyrophosphate from FPP to yield a (R)-bisabolyl cation. The only accepted substrate is (2E,6E)-farnesyl diphosphate (FPP). The chain is (-)-alpha-amorphene synthase ((2E,6E)-farnesyl diphosphate cyclizing) from Streptomyces viridochromogenes (strain DSM 40736 / JCM 4977 / BCRC 1201 / Tue 494).